The sequence spans 211 residues: Ion-translocating oxidoreductase complex subunit G (211 aa).

A helical membrane pass occupies residues 9 to 29 (GLTLAIFACATTGLVALTQYL). T175 is modified (FMN phosphoryl threonine).

It belongs to the RnfG family. As to quaternary structure, the complex is composed of six subunits: RnfA, RnfB, RnfC, RnfD, RnfE and RnfG. It depends on FMN as a cofactor.

The protein localises to the cell inner membrane. Part of a membrane-bound complex that couples electron transfer with translocation of ions across the membrane. The protein is Ion-translocating oxidoreductase complex subunit G of Vibrio parahaemolyticus serotype O3:K6 (strain RIMD 2210633).